Here is a 430-residue protein sequence, read N- to C-terminus: Probable GPI-anchored adhesin-like protein PGA32 (430 aa).

The N-terminal stretch at 1–16 (MKVSTLIIVSIPIVSG) is a signal peptide. Disordered stretches follow at residues 88 to 195 (LGQV…TVIN), 232 to 257 (IASA…RGIK), 278 to 302 (GGNG…SKYF), and 314 to 336 (SKSI…SSTD). 2 stretches are compositionally biased toward low complexity: residues 92–112 (TTPS…PTTS) and 122–135 (TDTA…TNAR). The span at 141-167 (TPVTVSGDNVLTLFGNPNLSTGNDQSN) shows a compositional bias: polar residues. Composition is skewed to low complexity over residues 168 to 187 (SVSK…SSSS) and 233 to 253 (ASAS…SSSA). Positions 289-302 (YKNHSTTSTTSKYF) are enriched in polar residues. Positions 314–335 (SKSIYSNSTTSRSSLSVSSSST) are enriched in low complexity. The GPI-anchor amidated glycine moiety is linked to residue G401. Residues 402-430 (DGNKLIGGNKYLISFMWTNLILTMIMLFT) constitute a propeptide, removed in mature form.

The protein localises to the cell membrane. Its function is as follows. Putative adhesin which is involved in cell adhesion and virulence. The chain is Probable GPI-anchored adhesin-like protein PGA32 (PGA32) from Candida albicans (strain SC5314 / ATCC MYA-2876) (Yeast).